The primary structure comprises 436 residues: MPKPVIAIVGRPNVGKSTIFNRIVGERVSIVEDIPGITRDRIYSAGEWLNHEFNIIDTGGIDIGDEPFLTQIRQQAEVAIDEADVIIFMTNGRDGVTAADEEVAKILYRSKKPIVLAVNKVDNPDMRSDIYDFYALGFGEPFPISGTHGLGLGDLLDEAANHFPKIEEEAYDDETIRFSLIGRPNVGKSSLVNALLGQERVIVSNIAGTTRDAVDTPYSKDDQDYVIIDTAGMRKKGKVYESTEKYSVLRALRAIERSDVVLVVLDGEEGIIEQDKKIAGYAHDSGRAVIIVVNKWDAVKKDEKTMKAFEENIRAHFQFLEYAPIVFLSAKTKKRTQTLLPVINEVNESHSIRVQTNVLNDVIMDAVAMNPTPTHNGSRLKIFYATQVAVKPPTFVIFVNDTELMHFSYERFLKNRLREAFGFVGTPIHIIARARD.

2 EngA-type G domains span residues 4 to 167 (PVIA…PKIE) and 176 to 351 (IRFS…ESHS). GTP contacts are provided by residues 10–17 (GRPNVGKS), 57–61 (DTGGI), 119–122 (NKVD), 182–189 (GRPNVGKS), 229–233 (DTAGM), and 294–297 (NKWD). Positions 352 to 436 (IRVQTNVLND…PIHIIARARD (85 aa)) constitute a KH-like domain.

The protein belongs to the TRAFAC class TrmE-Era-EngA-EngB-Septin-like GTPase superfamily. EngA (Der) GTPase family. Associates with the 50S ribosomal subunit.

GTPase that plays an essential role in the late steps of ribosome biogenesis. In Bacillus mycoides (strain KBAB4) (Bacillus weihenstephanensis), this protein is GTPase Der.